We begin with the raw amino-acid sequence, 720 residues long: Cyclic nucleotide-gated ion channel 17 (720 aa).

The Cytoplasmic segment spans residues Met1–Val85. The helical transmembrane segment at Phe86–Ile106 threads the bilayer. The Extracellular portion of the chain corresponds to Gly107–Leu121. Residues Ser122–Ile142 traverse the membrane as a helical segment. Residues Lys143–Asp178 lie on the Cytoplasmic side of the membrane. A helical membrane pass occupies residues Phe179–Ser199. At Thr200–Asn211 the chain is on the extracellular side. A helical transmembrane segment spans residues Ala212–Ser232. Over Ser233 to Tyr252 the chain is Cytoplasmic. The helical transmembrane segment at Asn253–Val273 threads the bilayer. Over Asp274–Thr377 the chain is Extracellular. The chain crosses the membrane as a helical span at residues Thr378–Met398. Residues Gln399–Asp720 lie on the Cytoplasmic side of the membrane. Residues Phe481 to Leu605 and Glu552 contribute to the a nucleoside 3',5'-cyclic phosphate site. Positions Phe597 to Tyr612 are calmodulin-binding. In terms of domain architecture, IQ spans Arg617–Met646.

Belongs to the cyclic nucleotide-gated cation channel (TC 1.A.1.5) family. Homotetramer or heterotetramer. Part of a functional complex containing PSKR1, BAK1, CNGC17, and AHA. Interacts with AHA1, AHA2, and BAK1, but not with PSKR1 or BRI1.

It is found in the cell membrane. Its function is as follows. Probable cyclic nucleotide-gated ion channel. Forms a functional cation-translocating unit with AHAs that is activated by PSKR1/BAK1 and possibly other BAK1/RLK complexes. Required for PSK-induced protoplast expansion. In Arabidopsis thaliana (Mouse-ear cress), this protein is Cyclic nucleotide-gated ion channel 17.